The sequence spans 122 residues: MIQQESRLKVADNTGAKEILCIRVLGGSSRRYAGIGDIIVATVKDAIPGGTVKRGDVVKAVVVRTVKERRRPDGSYIKFDENAAVIIKADNDPRGTRIFGPVGRELRDKKFMKIVSLAPEVL.

Belongs to the universal ribosomal protein uL14 family. As to quaternary structure, part of the 50S ribosomal subunit. Forms a cluster with proteins L3 and L19. In the 70S ribosome, L14 and L19 interact and together make contacts with the 16S rRNA in bridges B5 and B8.

Its function is as follows. Binds to 23S rRNA. Forms part of two intersubunit bridges in the 70S ribosome. The polypeptide is Large ribosomal subunit protein uL14 (Mycobacteroides abscessus (strain ATCC 19977 / DSM 44196 / CCUG 20993 / CIP 104536 / JCM 13569 / NCTC 13031 / TMC 1543 / L948) (Mycobacterium abscessus)).